Here is a 152-residue protein sequence, read N- to C-terminus: Large ribosomal subunit protein bL9 (152 aa).

The protein belongs to the bacterial ribosomal protein bL9 family.

Its function is as follows. Binds to the 23S rRNA. In Mycobacterium ulcerans (strain Agy99), this protein is Large ribosomal subunit protein bL9.